We begin with the raw amino-acid sequence, 400 residues long: NADH-quinone oxidoreductase subunit D (400 aa).

The protein belongs to the complex I 49 kDa subunit family. NDH-1 is composed of 14 different subunits. Subunits NuoB, C, D, E, F, and G constitute the peripheral sector of the complex.

Its subcellular location is the cell inner membrane. The enzyme catalyses a quinone + NADH + 5 H(+)(in) = a quinol + NAD(+) + 4 H(+)(out). NDH-1 shuttles electrons from NADH, via FMN and iron-sulfur (Fe-S) centers, to quinones in the respiratory chain. The immediate electron acceptor for the enzyme in this species is believed to be a menaquinone. Couples the redox reaction to proton translocation (for every two electrons transferred, four hydrogen ions are translocated across the cytoplasmic membrane), and thus conserves the redox energy in a proton gradient. The protein is NADH-quinone oxidoreductase subunit D of Chlorobium chlorochromatii (strain CaD3).